Reading from the N-terminus, the 87-residue chain is Tachykinin-1 (87 aa).

Residues 1-22 form the signal peptide; the sequence is MIRVGLILCCIFIAGVFEASSA. Residues 23–37 constitute a propeptide that is removed on maturation; that stretch reads DDMLTAHNLIKRSEV. M49 carries the methionine amide modification. Positions 52–87 are excised as a propeptide; the sequence is SEELTRRLIQHPGSMSETSKRGPPKKVSRRPYILKK. A disordered region spans residues 61–87; the sequence is QHPGSMSETSKRGPPKKVSRRPYILKK. The span at 73–87 shows a compositional bias: basic residues; it reads GPPKKVSRRPYILKK.

Belongs to the tachykinin family. As to expression, expressed in the posterior salivary gland and more specifically in the mucus-secreting gland cells.

It is found in the secreted. Tachykinins are active peptides which excite neurons, evoke behavioral responses, are potent vasodilators and secretagogues, and contract (directly or indirectly) many smooth muscles. In Octopus vulgaris (Common octopus), this protein is Tachykinin-1.